A 292-amino-acid polypeptide reads, in one-letter code: Malectin (292 aa).

A signal peptide spans 1 to 28 (MLGAWAVEGTAVALLRLLLLLLPPAIRG). Residues 29 to 269 (PGLGVAGVAG…TPNPYASDNS (241 aa)) are Lumenal-facing. Residues Y82, Y104, Y131, F132, and D201 each coordinate a carbohydrate. A disordered region spans residues 221 to 265 (LQPHPGLEKKEEEEEEEEYDEGSNLKKQTNKNRVQSGPRTPNPYA). The segment covering 231–241 (EEEEEEEEYDE) has biased composition (acidic residues). Polar residues predominate over residues 245–265 (LKKQTNKNRVQSGPRTPNPYA). N268 is a glycosylation site (N-linked (GlcNAc...) asparagine). The chain crosses the membrane as a helical span at residues 270-290 (SLMFPILVAFGVFIPTLFCLC). The Cytoplasmic segment spans residues 291-292 (RL).

This sequence belongs to the malectin family. As to quaternary structure, interacts with the oligosaccharyltransferase (OST) complex.

The protein localises to the endoplasmic reticulum membrane. Functionally, carbohydrate-binding protein with a strong ligand preference for Glc2-N-glycan. May play a role in the early steps of protein N-glycosylation. The chain is Malectin from Homo sapiens (Human).